We begin with the raw amino-acid sequence, 275 residues long: Ribosomal RNA small subunit methyltransferase A (275 aa).

S-adenosyl-L-methionine-binding residues include N21, L23, G48, E69, D94, and N115.

The protein belongs to the class I-like SAM-binding methyltransferase superfamily. rRNA adenine N(6)-methyltransferase family. RsmA subfamily.

It localises to the cytoplasm. The enzyme catalyses adenosine(1518)/adenosine(1519) in 16S rRNA + 4 S-adenosyl-L-methionine = N(6)-dimethyladenosine(1518)/N(6)-dimethyladenosine(1519) in 16S rRNA + 4 S-adenosyl-L-homocysteine + 4 H(+). Its function is as follows. Specifically dimethylates two adjacent adenosines (A1518 and A1519) in the loop of a conserved hairpin near the 3'-end of 16S rRNA in the 30S particle. May play a critical role in biogenesis of 30S subunits. In Clostridium botulinum (strain Okra / Type B1), this protein is Ribosomal RNA small subunit methyltransferase A.